The primary structure comprises 172 residues: MIGAQKKQSGKKTASRAVRKPAKKVAAKRTVKKATVRKTAVKKPAVRKTAAKKTVAKKTTAKRTVRKTVAKKPAVKKVAAKRVVKKTVAKKTTAKRAVRKTVAKKPVARKTTVAKGSPKKAAACALACHKNHKHTSSCKRVCSSTATRKHGSKSRVRTAHGWRHQLIKMMSR.

The interval 1–77 (MIGAQKKQSG…TVAKKPAVKK (77 aa)) is disordered. The segment covering 8 to 77 (QSGKKTASRA…TVAKKPAVKK (70 aa)) has biased composition (basic residues).

This sequence belongs to the histone H1/H5 family. HCT subfamily.

Functionally, might have a role in establishing the nucleoid structure of elementary bodies. The sequence is that of Histone H1-like protein HC2 (hctB) from Chlamydia pneumoniae (Chlamydophila pneumoniae).